The following is a 2475-amino-acid chain: Gellan lyase (2475 aa).

The signal sequence occupies residues 1–35; sequence MRFSWKKLVSAALVMALLVGIVYPAASGRGAVASA. The 86-residue stretch at 623–708 folds into the Fibronectin type-III domain; the sequence is APANVQVAIS…QPATATSPGE (86 aa). One can recognise a NodB homology domain in the interval 1295–1518; that stretch reads GAFSLTIDDN…RDQIWVGRYG (224 aa). The region spanning 2111–2223 is the Cohesin domain; that stretch reads QPGQQLELTV…VSTAVSLSDF (113 aa).

Post-translationally, subject to proteolytic processing after secretion. Cleavage occurs between Gly-1205 and Leu-1206. This gives rise to a N-terminal gellan lyase of 130 kDa being the mature form of the gellan lyase. The function of C-terminal gellan lyase is not known.

It localises to the secreted. The enzyme catalyses Eliminative cleavage of beta-D-glucopyranosyl-(1-&gt;4)-beta-D-glucopyranosyluronate bonds of gellan backbone releasing tetrasaccharides containing a 4-deoxy-4,5-unsaturated D-glucopyranosyluronic acid at the non-reducing end. The tetrasaccharide produced from deacetylated gellan is beta-D-4-deoxy-Delta(4)-GlcAp-(1-&gt;4)-beta-D-Glcp-(1-&gt;4)-alpha-L-Rhap-(1-&gt;3)-beta-D-Glcp.. Cleaves the glycosidic bonds of gellan backbone and releases tetrasaccharide units of glucuronyl-glucosyl-rhamnosyl-glucose with unsaturated glucuronic acid at the non-reducing terminal. The enzyme is highly specific to the heteropolysaccharide gellan, especially deacetylated gellan. In Bacillus sp, this protein is Gellan lyase.